The primary structure comprises 391 residues: Succinate--CoA ligase [ADP-forming] subunit beta (391 aa).

One can recognise an ATP-grasp domain in the interval 9-245 (KQIFAKYGVP…ISEEDADERE (237 aa)). Residues Lys-46, 53–55 (GRG), Glu-99, Ala-102, and Glu-107 each bind ATP. Asn-200 and Asp-214 together coordinate Mg(2+). Residues Asn-265 and 322-324 (GIV) contribute to the substrate site.

Belongs to the succinate/malate CoA ligase beta subunit family. As to quaternary structure, heterotetramer of two alpha and two beta subunits. Requires Mg(2+) as cofactor.

The catalysed reaction is succinate + ATP + CoA = succinyl-CoA + ADP + phosphate. The enzyme catalyses GTP + succinate + CoA = succinyl-CoA + GDP + phosphate. It functions in the pathway carbohydrate metabolism; tricarboxylic acid cycle; succinate from succinyl-CoA (ligase route): step 1/1. In terms of biological role, succinyl-CoA synthetase functions in the citric acid cycle (TCA), coupling the hydrolysis of succinyl-CoA to the synthesis of either ATP or GTP and thus represents the only step of substrate-level phosphorylation in the TCA. The beta subunit provides nucleotide specificity of the enzyme and binds the substrate succinate, while the binding sites for coenzyme A and phosphate are found in the alpha subunit. This chain is Succinate--CoA ligase [ADP-forming] subunit beta, found in Sulfurimonas denitrificans (strain ATCC 33889 / DSM 1251) (Thiomicrospira denitrificans (strain ATCC 33889 / DSM 1251)).